A 261-amino-acid polypeptide reads, in one-letter code: Indole-3-glycerol phosphate synthase (261 aa).

Belongs to the TrpC family.

It catalyses the reaction 1-(2-carboxyphenylamino)-1-deoxy-D-ribulose 5-phosphate + H(+) = (1S,2R)-1-C-(indol-3-yl)glycerol 3-phosphate + CO2 + H2O. The protein operates within amino-acid biosynthesis; L-tryptophan biosynthesis; L-tryptophan from chorismate: step 4/5. The sequence is that of Indole-3-glycerol phosphate synthase from Campylobacter hominis (strain ATCC BAA-381 / DSM 21671 / CCUG 45161 / LMG 19568 / NCTC 13146 / CH001A).